The sequence spans 521 residues: Probable inorganic phosphate transporter 1-3 (521 aa).

Topologically, residues 1 to 24 (MADQQLGVLKALDVAKTQLYHFTA) are cytoplasmic. Residues 25 to 45 (IVIAGMGFFTDAYDLFCVSLV) form a helical membrane-spanning segment. Over 46–70 (TKLLGRLYYFNPTSAKPGSLPPHVA) the chain is Extracellular. The chain crosses the membrane as a helical span at residues 71–91 (AAVNGVALCGTLAGQLFFGWL). At 92-99 (GDKLGRKK) the chain is on the cytoplasmic side. The helical transmembrane segment at 100 to 120 (VYGITLIMMILCSVASGLSLG) threads the bilayer. Topologically, residues 121–131 (NSAKGVMTTLC) are extracellular. A helical membrane pass occupies residues 132–152 (FFRFWLGFGIGGDYPLSATIM). Residues 153 to 161 (SEYANKKTR) are Cytoplasmic-facing. A helical transmembrane segment spans residues 162-182 (GAFIAAVFAMQGVGILAGGFV). The Extracellular portion of the chain corresponds to 183–211 (ALAVSSIFDKKFPSPTYEQDRFLSTPPQA). A helical transmembrane segment spans residues 212-232 (DYIWRIIVMFGALPAALTYYW). Over 233-292 (RMKMPETARYTALVAKNIKQATADMSKVLQTDLELEERVEDDVKDPKKNYGLFSKEFLRR) the chain is Cytoplasmic. The chain crosses the membrane as a helical span at residues 293–313 (HGLHLLGTTSTWFLLDIAFYS). The Extracellular segment spans residues 314-348 (QNLFQKDIFSAIGWIPKAATMNAIHEVFKIARAQT). Residues 349–369 (LIALCSTVPGYWFTVAFIDII) traverse the membrane as a helical segment. Over 370–371 (GR) the chain is Cytoplasmic. Residues 372–392 (FAIQLMGFFMMTVFMFAIAFP) form a helical membrane-spanning segment. Over 393–402 (YNHWILPDNR) the chain is Extracellular. Residues 403 to 423 (IGFVVMYSLTFFFANFGPNAT) traverse the membrane as a helical segment. Residues 424 to 441 (TFIVPAEIFPARLRSTCH) lie on the Cytoplasmic side of the membrane. The helical transmembrane segment at 442-462 (GISAATGKAGAIVGAFGFLYA) threads the bilayer. Residues 463–484 (AQPQDKTKTDAGYPPGIGVKNS) are Extracellular-facing. Residues 485–505 (LIMLGVINFVGMLFTFLVPEP) traverse the membrane as a helical segment. Residues 506 to 521 (KGKSLEELSGEAEVDK) lie on the Cytoplasmic side of the membrane.

It belongs to the major facilitator superfamily. Phosphate:H(+) symporter (TC 2.A.1.9) family. As to expression, mainly expressed in roots, especially in the stele of the primary root, the pericycle and trichoblasts of secondary roots. To a lower extent, present in hydathodes and vascular tissues of young leaves.

It localises to the membrane. Functionally, high-affinity transporter for external inorganic phosphate. The protein is Probable inorganic phosphate transporter 1-3 (PHT1-3) of Arabidopsis thaliana (Mouse-ear cress).